Consider the following 181-residue polypeptide: Mating-type M-specific polypeptide Mc (181 aa).

A DNA-binding region (HMG box) is located at residues 103–171 (TPRPPNAFIL…QHQKMYPGYK (69 aa)).

The protein localises to the nucleus. Functionally, mating type proteins are sequence specific DNA-binding proteins that act as master switches in yeast differentiation by controlling gene expression in a cell type-specific fashion. Positive regulator of MFM genes. The HMG box recognizes the DNA sequence 5'-AACAAAG-3'. Required for conjugation and efficient meiosis. This Schizosaccharomyces kambucha (Fission yeast) protein is Mating-type M-specific polypeptide Mc (matMc).